A 54-amino-acid polypeptide reads, in one-letter code: UPF0391 membrane protein BAB1_1670 (54 aa).

The next 2 helical transmembrane spans lie at 5-25 (VLVF…GIAG) and 29-48 (GIAQ…SLIA).

The protein belongs to the UPF0391 family.

Its subcellular location is the cell membrane. The sequence is that of UPF0391 membrane protein BAB1_1670 from Brucella abortus (strain 2308).